The chain runs to 786 residues: Endonuclease MutS2 (786 aa).

Gly-335–Thr-342 contributes to the ATP binding site. The region spanning Leu-711 to Lys-786 is the Smr domain.

The protein belongs to the DNA mismatch repair MutS family. MutS2 subfamily. Homodimer. Binds to stalled ribosomes, contacting rRNA.

Functionally, endonuclease that is involved in the suppression of homologous recombination and thus may have a key role in the control of bacterial genetic diversity. Its function is as follows. Acts as a ribosome collision sensor, splitting the ribosome into its 2 subunits. Detects stalled/collided 70S ribosomes which it binds and splits by an ATP-hydrolysis driven conformational change. Acts upstream of the ribosome quality control system (RQC), a ribosome-associated complex that mediates the extraction of incompletely synthesized nascent chains from stalled ribosomes and their subsequent degradation. Probably generates substrates for RQC. This Bacillus cytotoxicus (strain DSM 22905 / CIP 110041 / 391-98 / NVH 391-98) protein is Endonuclease MutS2.